Consider the following 134-residue polypeptide: FK506-binding protein 2 (134 aa).

The N-terminal stretch at 1 to 19 (MRFSIFSTLLVSLATLSTA) is a signal peptide. The PPIase FKBP-type domain occupies 39-127 (GDTVQMHYKG…IFETELVGID (89 aa)). Positions 131 to 134 (KDEL) match the Prevents secretion from ER motif.

It belongs to the FKBP-type PPIase family. FKBP2 subfamily.

The protein resides in the endoplasmic reticulum. It catalyses the reaction [protein]-peptidylproline (omega=180) = [protein]-peptidylproline (omega=0). With respect to regulation, inhibited by both FK506 and rapamycin. Its function is as follows. PPIases accelerate the folding of proteins. It catalyzes the cis-trans isomerization of proline imidic peptide bonds in oligopeptides. The polypeptide is FK506-binding protein 2 (fpr2) (Aspergillus oryzae (strain ATCC 42149 / RIB 40) (Yellow koji mold)).